Here is a 375-residue protein sequence, read N- to C-terminus: Probable mitochondrial tRNA-specific 2-thiouridylase 1 (375 aa).

ATP-binding positions include 7-14 (GMSGGVDS) and M33. Residues 94–96 (VPD) are interaction with target base in tRNA. C99 serves as the catalytic Nucleophile. C99 and C205 are joined by a disulfide. G124 provides a ligand contact to ATP. The tract at residues 154–156 (KDQ) is interaction with tRNA. C205 (cysteine persulfide intermediate) is an active-site residue. Positions 319 to 320 (QR) are interaction with tRNA.

The protein belongs to the MnmA/TRMU family.

The protein resides in the mitochondrion. It catalyses the reaction 5-taurinomethyluridine(34) in tRNA + S-sulfanyl-L-cysteinyl-[protein] + AH2 + ATP = 5-taurinomethyl-2-thiouridine(34) in tRNA + L-cysteinyl-[protein] + A + AMP + diphosphate + H(+). In terms of biological role, catalyzes the 2-thiolation of uridine at the wobble position (U34) of mitochondrial tRNA(Lys), tRNA(Glu) and tRNA(Gln). Required for the formation of 5-taurinomethyl-2-thiouridine (tm5s2U) of mitochondrial tRNA(Lys), tRNA(Glu), and tRNA(Gln) at the wobble position. ATP is required to activate the C2 atom of the wobble base. The sequence is that of Probable mitochondrial tRNA-specific 2-thiouridylase 1 from Caenorhabditis elegans.